Here is a 423-residue protein sequence, read N- to C-terminus: Serine--tRNA ligase (423 aa).

231–233 (TAE) contributes to the L-serine binding site. An ATP-binding site is contributed by 262–264 (RSE). Glu-285 lines the L-serine pocket. 349-352 (EISS) contacts ATP. Residue Ser-384 coordinates L-serine.

The protein belongs to the class-II aminoacyl-tRNA synthetase family. Type-1 seryl-tRNA synthetase subfamily. In terms of assembly, homodimer. The tRNA molecule binds across the dimer.

It localises to the cytoplasm. It catalyses the reaction tRNA(Ser) + L-serine + ATP = L-seryl-tRNA(Ser) + AMP + diphosphate + H(+). It carries out the reaction tRNA(Sec) + L-serine + ATP = L-seryl-tRNA(Sec) + AMP + diphosphate + H(+). Its pathway is aminoacyl-tRNA biosynthesis; selenocysteinyl-tRNA(Sec) biosynthesis; L-seryl-tRNA(Sec) from L-serine and tRNA(Sec): step 1/1. In terms of biological role, catalyzes the attachment of serine to tRNA(Ser). Is also able to aminoacylate tRNA(Sec) with serine, to form the misacylated tRNA L-seryl-tRNA(Sec), which will be further converted into selenocysteinyl-tRNA(Sec). This chain is Serine--tRNA ligase, found in Lactococcus lactis subsp. cremoris (strain MG1363).